The sequence spans 251 residues: Triosephosphate isomerase (251 aa).

12–14 provides a ligand contact to substrate; that stretch reads NWK. The active-site Electrophile is the His-98. Glu-168 acts as the Proton acceptor in catalysis. Substrate is bound by residues Gly-174, Ser-213, and 234 to 235; that span reads GG.

It belongs to the triosephosphate isomerase family. In terms of assembly, homodimer.

It localises to the cytoplasm. It catalyses the reaction D-glyceraldehyde 3-phosphate = dihydroxyacetone phosphate. Its pathway is carbohydrate biosynthesis; gluconeogenesis. The protein operates within carbohydrate degradation; glycolysis; D-glyceraldehyde 3-phosphate from glycerone phosphate: step 1/1. Involved in the gluconeogenesis. Catalyzes stereospecifically the conversion of dihydroxyacetone phosphate (DHAP) to D-glyceraldehyde-3-phosphate (G3P). The polypeptide is Triosephosphate isomerase (Afipia carboxidovorans (strain ATCC 49405 / DSM 1227 / KCTC 32145 / OM5) (Oligotropha carboxidovorans)).